The chain runs to 444 residues: Probable galactarate/D-glucarate transporter GarP (444 aa).

The Cytoplasmic segment spans residues 1–11 (MILDTVDEKKK). A helical membrane pass occupies residues 12–32 (GVHTRYLILLIIFIVTAVNYA). The Periplasmic portion of the chain corresponds to 33–56 (DRATLSIAGTEVAKELQLSAVSMG). The helical transmembrane segment at 57 to 77 (YIFSAFGWAYLLMQIPGGWLL) threads the bilayer. At 78 to 89 (DKFGSKKVYTYS) the chain is on the cytoplasmic side. A run of 2 helical transmembrane segments spans residues 90–110 (LFFW…PLAW) and 111–131 (AGIS…PSFP). The Cytoplasmic portion of the chain corresponds to 132–157 (ANARIVAAWFPTKERGTASAIFNSAQ). Transmembrane regions (helical) follow at residues 158-178 (YFSL…WGWE) and 179-199 (HVFT…IKLI). Residues 200–252 (HNPTDHPRMSAEELKFISENGAVVDMDHKKPGSAAASGPKLHYIKQLLSNRMM) are Cytoplasmic-facing. Residues 253–273 (LGVFFGQYFINTITWFFLTWF) form a helical membrane-spanning segment. The Periplasmic portion of the chain corresponds to 274–288 (PIYLVQEKGMSILKV). Residues 289–309 (GLVASIPALCGFAGGVLGGVF) form a helical membrane-spanning segment. The Cytoplasmic segment spans residues 310 to 319 (SDYLIKRGLS). The chain crosses the membrane as a helical span at residues 320-340 (LTLARKLPIVLGMLLASTIIL). At 341 to 350 (CNYTNNTTLV) the chain is on the periplasmic side. A helical membrane pass occupies residues 351–371 (VMLMALAFFGKGFGALGWPVI). The Cytoplasmic portion of the chain corresponds to 372–385 (SDTAPKEIVGLCGG). A helical transmembrane segment spans residues 386 to 406 (VFNVFGNVASIVTPLVIGYLV). Residues 407 to 413 (SELHSFN) lie on the Periplasmic side of the membrane. The chain crosses the membrane as a helical span at residues 414-434 (AALVFVGCSALMAMVCYLFVV). The Cytoplasmic portion of the chain corresponds to 435–444 (GDIKRMELQK).

The protein belongs to the major facilitator superfamily. Phthalate permease family.

The protein localises to the cell inner membrane. The enzyme catalyses galactarate(in) + H(+)(in) = galactarate(out) + H(+)(out). It carries out the reaction D-glucarate(in) + H(+)(in) = D-glucarate(out) + H(+)(out). It catalyses the reaction (R)-glycerate(in) + H(+)(in) = (R)-glycerate(out) + H(+)(out). Functionally, probably involved in the uptake of galactarate and/or D-glucarate. May also transport D-glycerate. The protein is Probable galactarate/D-glucarate transporter GarP of Escherichia coli (strain K12).